We begin with the raw amino-acid sequence, 332 residues long: Homeobox protein DLX-2 (332 aa).

Polar residues predominate over residues 19–28 (ASSTYHQHQQ). Positions 19 to 83 (ASSTYHQHQQ…QHPAGGGGGG (65 aa)) are disordered. Residues 40 to 49 (NSNSSSSNSS) show a composition bias toward low complexity. Positions 55 to 75 (ESPTLPVSTATDSSYYTNQQH) are enriched in polar residues. The homeobox DNA-binding region spans 155-214 (VRKPRTIYSSFQLAALQRRFQKTQYLALPERAELAASLGLTQTQVKIWFQNRRSKFKKMW). 2 disordered regions span residues 219-272 (IPTE…SSPS) and 304-332 (PSQTPQAHHHHHHHHHAGGGAPVSAGTIF). Ser235 bears the Phosphoserine mark. Positions 253 to 266 (AGGGPGSGGGGAGS) are enriched in gly residues. Basic residues predominate over residues 310 to 320 (AHHHHHHHHHA).

This sequence belongs to the distal-less homeobox family. As to quaternary structure, interacts (via homeobox DNA-binding domain) with POU4F2; this interaction enhances retinal ganglion cell (RGC) differentiation. Post-translationally, phosphorylated by serine/threonine kinases. In terms of tissue distribution, expressed only in neural and other ectodermal structures of the head: the brain, the vomeronasal organ, and the preameloblasts of the teeth. Primarily expressed in the germinal cells of the ventral forebrain in the midgestational embryo, and in both dorsal and ventral ventricular zones in late embryogenesis and early postnatal life. Expressed in the inner nuclear layer of the retina.

It is found in the nucleus. Acts as a transcriptional activator. Activates transcription of CGA/alpha-GSU, via binding to the downstream activin regulatory element (DARE) in the gene promoter. Plays a role in terminal differentiation of interneurons, such as amacrine and bipolar cells in the developing retina. Likely to play a regulatory role in the development of the ventral forebrain. May play a role in craniofacial patterning and morphogenesis. This chain is Homeobox protein DLX-2 (Dlx2), found in Mus musculus (Mouse).